A 329-amino-acid chain; its full sequence is DNA-directed RNA polymerase subunit alpha (329 aa).

Positions 1–235 (MQGSVTEFLK…EQLEAFVDLR (235 aa)) are alpha N-terminal domain (alpha-NTD). Residues 249–329 (FDPILLRPVD…NWPPASIADE (81 aa)) are alpha C-terminal domain (alpha-CTD).

The protein belongs to the RNA polymerase alpha chain family. In terms of assembly, homodimer. The RNAP catalytic core consists of 2 alpha, 1 beta, 1 beta' and 1 omega subunit. When a sigma factor is associated with the core the holoenzyme is formed, which can initiate transcription.

The enzyme catalyses RNA(n) + a ribonucleoside 5'-triphosphate = RNA(n+1) + diphosphate. In terms of biological role, DNA-dependent RNA polymerase catalyzes the transcription of DNA into RNA using the four ribonucleoside triphosphates as substrates. The sequence is that of DNA-directed RNA polymerase subunit alpha from Enterobacter sp. (strain 638).